The chain runs to 355 residues: UDP-N-acetylglucosamine--N-acetylmuramyl-(pentapeptide) pyrophosphoryl-undecaprenol N-acetylglucosamine transferase (355 aa).

Residues 13 to 15 (TGG), Asn-125, Arg-162, Ser-190, Ile-244, and Gln-289 contribute to the UDP-N-acetyl-alpha-D-glucosamine site.

It belongs to the glycosyltransferase 28 family. MurG subfamily.

It is found in the cell inner membrane. It carries out the reaction di-trans,octa-cis-undecaprenyl diphospho-N-acetyl-alpha-D-muramoyl-L-alanyl-D-glutamyl-meso-2,6-diaminopimeloyl-D-alanyl-D-alanine + UDP-N-acetyl-alpha-D-glucosamine = di-trans,octa-cis-undecaprenyl diphospho-[N-acetyl-alpha-D-glucosaminyl-(1-&gt;4)]-N-acetyl-alpha-D-muramoyl-L-alanyl-D-glutamyl-meso-2,6-diaminopimeloyl-D-alanyl-D-alanine + UDP + H(+). Its pathway is cell wall biogenesis; peptidoglycan biosynthesis. In terms of biological role, cell wall formation. Catalyzes the transfer of a GlcNAc subunit on undecaprenyl-pyrophosphoryl-MurNAc-pentapeptide (lipid intermediate I) to form undecaprenyl-pyrophosphoryl-MurNAc-(pentapeptide)GlcNAc (lipid intermediate II). This Neisseria gonorrhoeae (strain ATCC 700825 / FA 1090) protein is UDP-N-acetylglucosamine--N-acetylmuramyl-(pentapeptide) pyrophosphoryl-undecaprenol N-acetylglucosamine transferase.